The primary structure comprises 890 residues: Alanine--tRNA ligase (890 aa).

Residues His573, His577, Cys675, and His679 each contribute to the Zn(2+) site.

It belongs to the class-II aminoacyl-tRNA synthetase family. Zn(2+) is required as a cofactor.

It is found in the cytoplasm. The catalysed reaction is tRNA(Ala) + L-alanine + ATP = L-alanyl-tRNA(Ala) + AMP + diphosphate. Catalyzes the attachment of alanine to tRNA(Ala) in a two-step reaction: alanine is first activated by ATP to form Ala-AMP and then transferred to the acceptor end of tRNA(Ala). Also edits incorrectly charged Ser-tRNA(Ala) and Gly-tRNA(Ala) via its editing domain. The protein is Alanine--tRNA ligase of Streptomyces avermitilis (strain ATCC 31267 / DSM 46492 / JCM 5070 / NBRC 14893 / NCIMB 12804 / NRRL 8165 / MA-4680).